Here is a 90-residue protein sequence, read N- to C-terminus: DNA-directed RNA polymerase subunit omega (90 aa).

The disordered stretch occupies residues 69–90 (RQEQQEQEAAELAAVSSIAHTR).

Belongs to the RNA polymerase subunit omega family. As to quaternary structure, the RNAP catalytic core consists of 2 alpha, 1 beta, 1 beta' and 1 omega subunit. When a sigma factor is associated with the core the holoenzyme is formed, which can initiate transcription.

It catalyses the reaction RNA(n) + a ribonucleoside 5'-triphosphate = RNA(n+1) + diphosphate. Functionally, promotes RNA polymerase assembly. Latches the N- and C-terminal regions of the beta' subunit thereby facilitating its interaction with the beta and alpha subunits. This is DNA-directed RNA polymerase subunit omega from Vibrio atlanticus (strain LGP32) (Vibrio splendidus (strain Mel32)).